We begin with the raw amino-acid sequence, 280 residues long: Protein scylla (280 aa).

Residues L39–S96 are disordered. 2 stretches are compositionally biased toward low complexity: residues T46–S69 and G77–S96.

It belongs to the DDIT4 family.

It is found in the cytoplasm. Functionally, inhibits cell growth by regulating the Tor pathway upstream of the Tsc1-Tsc2 complex and downstream of Akt1. Acts as a cell death activator during head development. The protein is Protein scylla (scyl) of Drosophila melanogaster (Fruit fly).